A 287-amino-acid chain; its full sequence is Protoheme IX farnesyltransferase (287 aa).

The next 7 helical transmembrane spans lie at 19-39 (LMVAGATFFGAMLAVPHVTIT), 100-120 (MVLCLAGGLTSLLVGIGIVAV), 134-154 (FALLVGAAAGAMPPVVGWLAV), 162-182 (MLVVVYTLYLLWQIPHFWLHA), 212-232 (VWFHAYAVAVLMVPAFPLLEG), 233-253 (VGMRIMVTLCGIALLFAAMLA), and 267-287 (VLCAVMVVLLIDRLAIPVSLF).

This sequence belongs to the UbiA prenyltransferase family. Protoheme IX farnesyltransferase subfamily.

The protein localises to the cell inner membrane. The catalysed reaction is heme b + (2E,6E)-farnesyl diphosphate + H2O = Fe(II)-heme o + diphosphate. Its pathway is porphyrin-containing compound metabolism; heme O biosynthesis; heme O from protoheme: step 1/1. In terms of biological role, converts heme B (protoheme IX) to heme O by substitution of the vinyl group on carbon 2 of heme B porphyrin ring with a hydroxyethyl farnesyl side group. In Nitratidesulfovibrio vulgaris (strain DP4) (Desulfovibrio vulgaris), this protein is Protoheme IX farnesyltransferase.